The primary structure comprises 245 residues: 1-(5-phosphoribosyl)-5-[(5-phosphoribosylamino)methylideneamino] imidazole-4-carboxamide isomerase (245 aa).

Asp-10 (proton acceptor) is an active-site residue. Asp-135 functions as the Proton donor in the catalytic mechanism.

Belongs to the HisA/HisF family.

The protein resides in the cytoplasm. The enzyme catalyses 1-(5-phospho-beta-D-ribosyl)-5-[(5-phospho-beta-D-ribosylamino)methylideneamino]imidazole-4-carboxamide = 5-[(5-phospho-1-deoxy-D-ribulos-1-ylimino)methylamino]-1-(5-phospho-beta-D-ribosyl)imidazole-4-carboxamide. It functions in the pathway amino-acid biosynthesis; L-histidine biosynthesis; L-histidine from 5-phospho-alpha-D-ribose 1-diphosphate: step 4/9. The chain is 1-(5-phosphoribosyl)-5-[(5-phosphoribosylamino)methylideneamino] imidazole-4-carboxamide isomerase from Methanosarcina barkeri (strain Fusaro / DSM 804).